The following is a 223-amino-acid chain: Ribose-5-phosphate isomerase A (223 aa).

Substrate-binding positions include 32–35 (TGST), 85–88 (DGAD), and 98–101 (KGGG). E107 functions as the Proton acceptor in the catalytic mechanism. Position 125 (K125) interacts with substrate.

It belongs to the ribose 5-phosphate isomerase family. In terms of assembly, homodimer.

The catalysed reaction is aldehydo-D-ribose 5-phosphate = D-ribulose 5-phosphate. It functions in the pathway carbohydrate degradation; pentose phosphate pathway; D-ribose 5-phosphate from D-ribulose 5-phosphate (non-oxidative stage): step 1/1. Its function is as follows. Catalyzes the reversible conversion of ribose-5-phosphate to ribulose 5-phosphate. The sequence is that of Ribose-5-phosphate isomerase A from Pseudomonas paraeruginosa (strain DSM 24068 / PA7) (Pseudomonas aeruginosa (strain PA7)).